Consider the following 195-residue polypeptide: Replication restart protein PriC (195 aa).

This sequence belongs to the PriC family. Monomer. Component of the replication restart primosome, which is composed of PriA, PriB, PriC, DnaB and DnaT; DnaG primase associates transiently with this complex. Interacts with the C-terminus of SSB; this interaction is required to load the main replicative helicase onto substrate replication forks. Interacts with helicase DnaB alone and in the DnaB-DnaC complex, probably 1:1 binding with DnaB.

Involved in the restart of stalled replication forks, which reloads the DnaB replicative helicase on sites other than the origin of replication. Recognizes abandoned replication forks and remodels DNA single-stranded binding protein (SSB) on ssDNA to uncover a loading site for DnaB. There are several restart pathways, the PriA-PriC pathway is a minor restart pathway. Part of the minor PriC-Rep pathway for restart of stalled replication forks, which has a different substrate specificity than PriA. Part of the major restart pathway with PriA, PriB, DnaB, DnaT and DnaG primase. priB and priC have redundant roles in the cell. The chain is Replication restart protein PriC from Haemophilus influenzae (strain ATCC 51907 / DSM 11121 / KW20 / Rd).